A 216-amino-acid polypeptide reads, in one-letter code: Phosphoribosylaminoimidazole-succinocarboxamide synthase (216 aa).

It belongs to the SAICAR synthetase family.

The enzyme catalyses 5-amino-1-(5-phospho-D-ribosyl)imidazole-4-carboxylate + L-aspartate + ATP = (2S)-2-[5-amino-1-(5-phospho-beta-D-ribosyl)imidazole-4-carboxamido]succinate + ADP + phosphate + 2 H(+). The protein operates within purine metabolism; IMP biosynthesis via de novo pathway; 5-amino-1-(5-phospho-D-ribosyl)imidazole-4-carboxamide from 5-amino-1-(5-phospho-D-ribosyl)imidazole-4-carboxylate: step 1/2. The sequence is that of Phosphoribosylaminoimidazole-succinocarboxamide synthase (purC) from Aquifex aeolicus (strain VF5).